A 227-amino-acid chain; its full sequence is MAYPFQLGLQDATSPIMEELTNFHDHTLMIVFLISSLVLYIISSMLATKMTHTSTMDAQSMETIWTILPAVILVLIALPSLRILYMMDEINNPVLTVKTMGHQWYWSYEYTDYEDLCFDSYMVPTNDLKPGELRLLEVDNRVVLPMELPIRMLISSEDVLHSWAVPSLGLKTDAIPGRLNQATVSSNRPGLFYGQCSEICGSNHSFMPIVLEMVPLKFFENWSASMI.

Residues Met1 to Ser14 are Mitochondrial intermembrane-facing. Residues Pro15–Met45 traverse the membrane as a helical segment. Topologically, residues Leu46–Gln59 are mitochondrial matrix. A helical membrane pass occupies residues Ser60–Met87. Topologically, residues Asp88–Ile227 are mitochondrial intermembrane. Cu cation is bound by residues His161, Cys196, Glu198, Cys200, His204, and Met207. Mg(2+) is bound at residue Glu198.

Belongs to the cytochrome c oxidase subunit 2 family. As to quaternary structure, component of the cytochrome c oxidase (complex IV, CIV), a multisubunit enzyme composed of 14 subunits. The complex is composed of a catalytic core of 3 subunits MT-CO1, MT-CO2 and MT-CO3, encoded in the mitochondrial DNA, and 11 supernumerary subunits COX4I, COX5A, COX5B, COX6A, COX6B, COX6C, COX7A, COX7B, COX7C, COX8 and NDUFA4, which are encoded in the nuclear genome. The complex exists as a monomer or a dimer and forms supercomplexes (SCs) in the inner mitochondrial membrane with NADH-ubiquinone oxidoreductase (complex I, CI) and ubiquinol-cytochrome c oxidoreductase (cytochrome b-c1 complex, complex III, CIII), resulting in different assemblies (supercomplex SCI(1)III(2)IV(1) and megacomplex MCI(2)III(2)IV(2)). Found in a complex with TMEM177, COA6, COX18, COX20, SCO1 and SCO2. Interacts with TMEM177 in a COX20-dependent manner. Interacts with COX20. Interacts with COX16. The cofactor is Cu cation.

Its subcellular location is the mitochondrion inner membrane. It catalyses the reaction 4 Fe(II)-[cytochrome c] + O2 + 8 H(+)(in) = 4 Fe(III)-[cytochrome c] + 2 H2O + 4 H(+)(out). Functionally, component of the cytochrome c oxidase, the last enzyme in the mitochondrial electron transport chain which drives oxidative phosphorylation. The respiratory chain contains 3 multisubunit complexes succinate dehydrogenase (complex II, CII), ubiquinol-cytochrome c oxidoreductase (cytochrome b-c1 complex, complex III, CIII) and cytochrome c oxidase (complex IV, CIV), that cooperate to transfer electrons derived from NADH and succinate to molecular oxygen, creating an electrochemical gradient over the inner membrane that drives transmembrane transport and the ATP synthase. Cytochrome c oxidase is the component of the respiratory chain that catalyzes the reduction of oxygen to water. Electrons originating from reduced cytochrome c in the intermembrane space (IMS) are transferred via the dinuclear copper A center (CU(A)) of subunit 2 and heme A of subunit 1 to the active site in subunit 1, a binuclear center (BNC) formed by heme A3 and copper B (CU(B)). The BNC reduces molecular oxygen to 2 water molecules using 4 electrons from cytochrome c in the IMS and 4 protons from the mitochondrial matrix. This is Cytochrome c oxidase subunit 2 (MT-CO2) from Acomys wilsoni (Wilson's spiny mouse).